Reading from the N-terminus, the 63-residue chain is Beta-defensin 35 (63 aa).

An N-terminal signal peptide occupies residues 1-23 (MPQTFFVFCFLFFVFLQLFPGTG). Disulfide bonds link Cys-31/Cys-58, Cys-38/Cys-52, and Cys-42/Cys-59.

This sequence belongs to the beta-defensin family. In terms of tissue distribution, expressed in testis, epididymis (caput, corpus and cauda), kidney and neonatal and adult brain.

The protein resides in the secreted. Its function is as follows. Has antibacterial activity. This chain is Beta-defensin 35 (Defb35), found in Mus musculus (Mouse).